Reading from the N-terminus, the 480-residue chain is Ochratoxinase (480 aa).

Zn(2+) contacts are provided by His111, His113, Lys246, His287, and His307. Lys246 is an active-site residue. Residue Asp378 is part of the active site.

This sequence belongs to the metallo-dependent hydrolases superfamily. Ochratoxinase amidase 2 family. Homooctamer. Zn(2+) serves as cofactor.

It localises to the secreted. It carries out the reaction ochratoxin A + H2O = ochratoxin alpha + L-phenylalanine. Its activity is regulated as follows. The Zn(2+)-specific chelator 1,10-phenanthroline inhibits the enzyme activity. In terms of biological role, carboxypeptidase that catalyzes the release of a C-terminal amino acid with specific catalytic activity for aromatic amino acids such as phenylalanine. Is able to degrade ochratoxin A, one of the five major mycotoxins most harmful to humans and animals that is produced by Aspergillus and Penicillium species and occurs in a wide range of agricultural products. The sequence is that of Ochratoxinase from Aspergillus niger (strain ATCC MYA-4892 / CBS 513.88 / FGSC A1513).